Reading from the N-terminus, the 83-residue chain is MYKATVIIKLKKGVLNPEGRTIQRALNFLGFNNVKEVQTYKMIDIIMEGENEEKVKEEVEEMCKKLLANPVIHDYEIKVEKIE.

Belongs to the PurS family. In terms of assembly, homodimer. Part of the FGAM synthase complex composed of 1 PurL, 1 PurQ and 2 PurS subunits.

Its subcellular location is the cytoplasm. The enzyme catalyses N(2)-formyl-N(1)-(5-phospho-beta-D-ribosyl)glycinamide + L-glutamine + ATP + H2O = 2-formamido-N(1)-(5-O-phospho-beta-D-ribosyl)acetamidine + L-glutamate + ADP + phosphate + H(+). The protein operates within purine metabolism; IMP biosynthesis via de novo pathway; 5-amino-1-(5-phospho-D-ribosyl)imidazole from N(2)-formyl-N(1)-(5-phospho-D-ribosyl)glycinamide: step 1/2. Its function is as follows. Part of the phosphoribosylformylglycinamidine synthase complex involved in the purines biosynthetic pathway. Catalyzes the ATP-dependent conversion of formylglycinamide ribonucleotide (FGAR) and glutamine to yield formylglycinamidine ribonucleotide (FGAM) and glutamate. The FGAM synthase complex is composed of three subunits. PurQ produces an ammonia molecule by converting glutamine to glutamate. PurL transfers the ammonia molecule to FGAR to form FGAM in an ATP-dependent manner. PurS interacts with PurQ and PurL and is thought to assist in the transfer of the ammonia molecule from PurQ to PurL. The sequence is that of Phosphoribosylformylglycinamidine synthase subunit PurS from Methanocaldococcus jannaschii (strain ATCC 43067 / DSM 2661 / JAL-1 / JCM 10045 / NBRC 100440) (Methanococcus jannaschii).